The chain runs to 194 residues: MAASLVGKKIVFVTGNAKKLEEVVQILGDKFPCTLVAQKIDLPEYQGEPDEISIQKCQEAVRQVQGPVLVEDTCLCFNALGGLPGPYIKWFLEKLKPEGLHQLLAGFEDKSAYALCTFALSTGDPSQPVRLFRGRTSGRIVAPRGCQDFGWDPCFQPDGYEQTYAEMPKAEKNAVSHRFRALLELQEYFGSLAA.

Position 2 is an N-acetylalanine (Ala-2). 14 to 19 (TGNAKK) is a binding site for ITP. A Mg(2+)-binding site is contributed by Glu-44. ITP is bound by residues Lys-56, 72–73 (DT), Lys-89, 149–152 (FGWD), Lys-172, and 177–178 (HR).

It belongs to the HAM1 NTPase family. In terms of assembly, homodimer. The cofactor is Mg(2+). As to expression, ubiquitous. Highly expressed in heart, liver, sex glands, thyroid and adrenal gland.

The protein localises to the cytoplasm. The catalysed reaction is ITP + H2O = IMP + diphosphate + H(+). The enzyme catalyses dITP + H2O = dIMP + diphosphate + H(+). It catalyses the reaction XTP + H2O = XMP + diphosphate + H(+). It carries out the reaction N(6)-hydroxy-dATP + H2O = N(6)-hydroxy-dAMP + diphosphate + H(+). Pyrophosphatase that hydrolyzes the non-canonical purine nucleotides inosine triphosphate (ITP), deoxyinosine triphosphate (dITP) as well as 2'-deoxy-N-6-hydroxylaminopurine triphosphate (dHAPTP) and xanthosine 5'-triphosphate (XTP) to their respective monophosphate derivatives. The enzyme does not distinguish between the deoxy- and ribose forms. Probably excludes non-canonical purines from RNA and DNA precursor pools, thus preventing their incorporation into RNA and DNA and avoiding chromosomal lesions. In Homo sapiens (Human), this protein is Inosine triphosphate pyrophosphatase.